The sequence spans 528 residues: Ecdysteroid UDP-glucosyltransferase (528 aa).

The N-terminal stretch at 1–32 is a signal peptide; sequence MGHLHIVHWRLTMNGAIAALFLCLVMVHQQHA.

This sequence belongs to the UDP-glycosyltransferase family.

Catalyzes the transfer of glucose from UDP-glucose to ecdysteroids which are insect molting hormones. Expression of egt interferes with normal insect development and block molting. The protein is Ecdysteroid UDP-glucosyltransferase (EGT) of Mamestra brassicae nuclear polyhedrosis virus (MbNPV).